The following is a 135-amino-acid chain: Ribonuclease P protein component (135 aa).

This sequence belongs to the RnpA family. Consists of a catalytic RNA component (M1 or rnpB) and a protein subunit.

The enzyme catalyses Endonucleolytic cleavage of RNA, removing 5'-extranucleotides from tRNA precursor.. In terms of biological role, RNaseP catalyzes the removal of the 5'-leader sequence from pre-tRNA to produce the mature 5'-terminus. It can also cleave other RNA substrates such as 4.5S RNA. The protein component plays an auxiliary but essential role in vivo by binding to the 5'-leader sequence and broadening the substrate specificity of the ribozyme. The chain is Ribonuclease P protein component from Xylella fastidiosa (strain Temecula1 / ATCC 700964).